The following is a 388-amino-acid chain: Bifunctional enzyme IspD/IspF (388 aa).

Residues 1 to 228 (MRIAALLLAA…GVIDRNLLPR (228 aa)) form a 2-C-methyl-D-erythritol 4-phosphate cytidylyltransferase region. The interval 228 to 388 (RVGLGYDVHA…SIMVPDNGEA (161 aa)) is 2-C-methyl-D-erythritol 2,4-cyclodiphosphate synthase. A divalent metal cation contacts are provided by Asp234 and His236. 4-CDP-2-C-methyl-D-erythritol 2-phosphate is bound by residues 234 to 236 (DVH) and 260 to 261 (HS). His268 serves as a coordination point for a divalent metal cation. 4-CDP-2-C-methyl-D-erythritol 2-phosphate is bound by residues 282 to 284 (DIG), 358 to 361 (TTSE), Phe365, and Arg368.

In the N-terminal section; belongs to the IspD/TarI cytidylyltransferase family. IspD subfamily. The protein in the C-terminal section; belongs to the IspF family. The cofactor is a divalent metal cation.

The catalysed reaction is 2-C-methyl-D-erythritol 4-phosphate + CTP + H(+) = 4-CDP-2-C-methyl-D-erythritol + diphosphate. It carries out the reaction 4-CDP-2-C-methyl-D-erythritol 2-phosphate = 2-C-methyl-D-erythritol 2,4-cyclic diphosphate + CMP. It functions in the pathway isoprenoid biosynthesis; isopentenyl diphosphate biosynthesis via DXP pathway; isopentenyl diphosphate from 1-deoxy-D-xylulose 5-phosphate: step 2/6. Its pathway is isoprenoid biosynthesis; isopentenyl diphosphate biosynthesis via DXP pathway; isopentenyl diphosphate from 1-deoxy-D-xylulose 5-phosphate: step 4/6. In terms of biological role, bifunctional enzyme that catalyzes the formation of 4-diphosphocytidyl-2-C-methyl-D-erythritol from CTP and 2-C-methyl-D-erythritol 4-phosphate (MEP) (IspD), and catalyzes the conversion of 4-diphosphocytidyl-2-C-methyl-D-erythritol 2-phosphate (CDP-ME2P) to 2-C-methyl-D-erythritol 2,4-cyclodiphosphate (ME-CPP) with a corresponding release of cytidine 5-monophosphate (CMP) (IspF). This Gluconobacter oxydans (strain 621H) (Gluconobacter suboxydans) protein is Bifunctional enzyme IspD/IspF.